The sequence spans 616 residues: MPDQPLNRTTIPEKKLSNLPTCPGVYQFKNNQGTIIYVGKAKNIRSRVRSYFREGPHISGKTKVLVNHIADIDIILTSSEVEALILENNLIKDLKPRYNINLKDDKTYPYLVITNEAFPRILITRQVKRDGSTYFGPYTEARQLRSVLDLISTIFPVRKCKLKLTKENIESGRFSVCLNYHIHTCKGPCEGKQREEDYLRMIEEIKGLLKGKTGALIRTLSAEMHRYADELRFEEAAELKIQIEGLRKYTERQKVVSKDPVDRDVFGIAQHQDDACGVIFKIREGKLLGSQRMYFSNVDDEQHETLLRKCLEKYYLETPDLIPQEIFLPLPIDDDEVMALRELTGDINLRFIVPKIGEKAKLVAMCIDNARHHLEEYLIEKQKRGELSRIVPALQALQETLHLSRQPERIECFDNSHFQGTDYTSSMVCFVGGKPRKSDYRKFKLNSFEGSDDYAAMQEAVTRRYSGSLQDELPLPDLIVIDGGKGQVNTAWKVLQELGLEIPVIGLAKRLEEIFLPNTPDPYNLAKTSPALKLLQQIRDEAHRFAITYHRKLRTKRTIQTGLTDIAGIGEKSAMKLLEHFGSIEQIAKAEKEEILAVTGPKTAEAILSYFRKKQP.

The GIY-YIG domain maps to 21–100 (TCPGVYQFKN…IKDLKPRYNI (80 aa)). One can recognise a UVR domain in the interval 214–249 (GALIRTLSAEMHRYADELRFEEAAELKIQIEGLRKY).

This sequence belongs to the UvrC family. As to quaternary structure, interacts with UvrB in an incision complex.

It localises to the cytoplasm. The UvrABC repair system catalyzes the recognition and processing of DNA lesions. UvrC both incises the 5' and 3' sides of the lesion. The N-terminal half is responsible for the 3' incision and the C-terminal half is responsible for the 5' incision. This chain is UvrABC system protein C, found in Prosthecochloris aestuarii (strain DSM 271 / SK 413).